The chain runs to 267 residues: X-box-binding protein 1 (267 aa).

Over 1 to 180 the chain is Cytoplasmic; the sequence is MVVVAAAPSA…VQAQLSPPQN (180 aa). The disordered stretch occupies residues 35 to 60; the sequence is VPGPRAAGSEASGTPQARKRQRLTHL. The residue at position 61 (S61) is a Phosphoserine. A bZIP domain is found at 63-126; sequence EEKALRRKLK…HGLVIENQEL (64 aa). The interval 65–87 is basic motif; it reads KALRRKLKNRVAAQTARDRKKAR. A nuclear localization signal (NLS) region spans residues 69-85; it reads RKLKNRVAAQTARDRKK. The leucine-zipper stretch occupies residues 91 to 126; the sequence is LEQQVVDLEEENQKLQLENQLLREKTHGLVIENQEL. Residues 181–198 form a helical; Signal-anchor for type II membrane protein membrane-spanning segment; it reads IFPWILTLLPLQILSLIS. The Lumenal portion of the chain corresponds to 199–267; that stretch reads FWAFWTSWTL…FVLTMYTPSL (69 aa).

It belongs to the bZIP family. As to quaternary structure, isoform 1 interacts with HM13. Isoform 1 interacts with RNF139; the interaction induces ubiquitination and degradation of isoform 1. Isoform 1 interacts (via luminal domain) with DERL1; the interaction obviates the need for ectodomain shedding prior HM13/SPP-mediated XBP1 isoform 1 cleavage. Isoform 1 interacts with HDAC3 and AKT1; the interactions occur in endothelial cell (EC) under disturbed flow. Isoform 1 interacts with the oncoprotein FOS. Interacts with SIRT1. In terms of processing, isoform 1 is ubiquitinated, leading to proteasome-mediated degradation in response to ER stress. X-box-binding protein 1, cytoplasmic form and luminal form are produced by intramembrane proteolytic cleavage of ER membrane-anchored isoform 1 triggered by HM13/SPP in a DERL1-RNF139-dependent and VCP/p97-independent manner. X-box-binding protein 1, luminal form is ubiquitinated leading to proteasomal degradation. Post-translationally, acetylated by EP300; acetylation positively regulates the transcriptional activity of XBP1. Deacetylated by SIRT1; deacetylation negatively regulates the transcriptional activity of XBP1.

The protein localises to the nucleus. The protein resides in the endoplasmic reticulum. It localises to the cytoplasm. Its subcellular location is the endoplasmic reticulum membrane. It is found in the membrane. In terms of biological role, functions as a transcription factor during endoplasmic reticulum (ER) stress by regulating the unfolded protein response (UPR). Required for cardiac myogenesis and hepatogenesis during embryonic development, and the development of secretory tissues such as exocrine pancreas and salivary gland. Involved in terminal differentiation of B lymphocytes to plasma cells and production of immunoglobulins. Modulates the cellular response to ER stress in a PIK3R-dependent manner. Binds to the cis-acting X box present in the promoter regions of major histocompatibility complex class II genes. Involved in VEGF-induced endothelial cell (EC) proliferation and retinal blood vessel formation during embryonic development but also for angiogenesis in adult tissues under ischemic conditions. Functions also as a major regulator of the UPR in obesity-induced insulin resistance and type 2 diabetes for the management of obesity and diabetes prevention. Functionally, acts as a weak transcriptional factor. Together with HDAC3, contributes to the activation of NFE2L2-mediated HMOX1 transcription factor gene expression in a PI(3)K/mTORC2/Akt-dependent signaling pathway leading to EC survival under disturbed flow/oxidative stress. Binds to the ER stress response element (ERSE) upon ER stress. Binds to the consensus 5'-GATGACGTG[TG]N(3)[AT]T-3' sequence related to cAMP responsive element (CRE)-like sequences. Associates preferentially to the HDAC3 gene promoter region in a static flow-dependent manner. Binds to the CDH5/VE-cadherin gene promoter region. This chain is X-box-binding protein 1, found in Rattus norvegicus (Rat).